The chain runs to 175 residues: Protein MODIFYING WALL LIGNIN-1 (175 aa).

Residues 1–24 (MFIFLFGLAAFFLCLSAEFQKAKA) form the signal peptide. At 25–52 (LLRAQVFLKGKDLKWDGESCYLPENRAF) the chain is on the cytoplasmic side. The helical transmembrane segment at 53 to 73 (GLGIAALVCVSVAQIVGNVVI) threads the bilayer. At 74 to 86 (CRGFTKTDKTRTT) the chain is on the extracellular side. Residues 87–107 (IFCIILLLFSWVNFAVAVTLI) form a helical membrane-spanning segment. The Cytoplasmic portion of the chain corresponds to 108–135 (SVGASMNREQIYGKGWLNRECYLVKDGV). The helical transmembrane segment at 136–156 (FAASGFLSVTTMAAILGAFAF) threads the bilayer. Topologically, residues 157–175 (KVKPSLQVENHDKRHTQNV) are extracellular.

This sequence belongs to the DESIGUAL family. In terms of assembly, interacts with CRK19.

It localises to the cell membrane. Together with MWL2, contributes to secondary cell wall biology, specifically lignin biosynthesis. The sequence is that of Protein MODIFYING WALL LIGNIN-1 from Arabidopsis thaliana (Mouse-ear cress).